The primary structure comprises 420 residues: Glutamyl-tRNA reductase (420 aa).

Residues 49–52 (TCNR), Ser-110, 115–117 (EHQ), and Gln-121 contribute to the substrate site. Residue Cys-50 is the Nucleophile of the active site. Residue 190–195 (GSGTIN) participates in NADP(+) binding.

Belongs to the glutamyl-tRNA reductase family. As to quaternary structure, homodimer.

The enzyme catalyses (S)-4-amino-5-oxopentanoate + tRNA(Glu) + NADP(+) = L-glutamyl-tRNA(Glu) + NADPH + H(+). The protein operates within porphyrin-containing compound metabolism; protoporphyrin-IX biosynthesis; 5-aminolevulinate from L-glutamyl-tRNA(Glu): step 1/2. In terms of biological role, catalyzes the NADPH-dependent reduction of glutamyl-tRNA(Glu) to glutamate 1-semialdehyde (GSA). The polypeptide is Glutamyl-tRNA reductase (Wigglesworthia glossinidia brevipalpis).